The primary structure comprises 182 residues: Ribosome-recycling factor (182 aa).

It belongs to the RRF family.

The protein localises to the cytoplasm. Its function is as follows. Responsible for the release of ribosomes from messenger RNA at the termination of protein biosynthesis. May increase the efficiency of translation by recycling ribosomes from one round of translation to another. The polypeptide is Ribosome-recycling factor (Parasynechococcus marenigrum (strain WH8102)).